The sequence spans 207 residues: Large ribosomal subunit protein uL4 (207 aa).

The disordered stretch occupies residues 55-76 (ALVSGGGKKPWRQKGTGRARHG). Residues 63-76 (KPWRQKGTGRARHG) show a composition bias toward basic residues.

It belongs to the universal ribosomal protein uL4 family. In terms of assembly, part of the 50S ribosomal subunit.

Functionally, one of the primary rRNA binding proteins, this protein initially binds near the 5'-end of the 23S rRNA. It is important during the early stages of 50S assembly. It makes multiple contacts with different domains of the 23S rRNA in the assembled 50S subunit and ribosome. In terms of biological role, forms part of the polypeptide exit tunnel. The sequence is that of Large ribosomal subunit protein uL4 from Phytoplasma mali (strain AT).